We begin with the raw amino-acid sequence, 332 residues long: 4-hydroxy-3-methylbut-2-enyl diphosphate reductase (332 aa).

Cys13 contacts [4Fe-4S] cluster. Residues His41 and His75 each contribute to the (2E)-4-hydroxy-3-methylbut-2-enyl diphosphate site. Dimethylallyl diphosphate-binding residues include His41 and His75. Isopentenyl diphosphate-binding residues include His41 and His75. Position 97 (Cys97) interacts with [4Fe-4S] cluster. Residue His125 coordinates (2E)-4-hydroxy-3-methylbut-2-enyl diphosphate. His125 serves as a coordination point for dimethylallyl diphosphate. An isopentenyl diphosphate-binding site is contributed by His125. The active-site Proton donor is Glu127. Thr168 serves as a coordination point for (2E)-4-hydroxy-3-methylbut-2-enyl diphosphate. [4Fe-4S] cluster is bound at residue Cys229. (2E)-4-hydroxy-3-methylbut-2-enyl diphosphate contacts are provided by Ser257, Ser258, Asn259, and Ser306. Positions 257, 258, 259, and 306 each coordinate dimethylallyl diphosphate. Isopentenyl diphosphate contacts are provided by Ser257, Ser258, Asn259, and Ser306.

It belongs to the IspH family. It depends on [4Fe-4S] cluster as a cofactor.

It carries out the reaction isopentenyl diphosphate + 2 oxidized [2Fe-2S]-[ferredoxin] + H2O = (2E)-4-hydroxy-3-methylbut-2-enyl diphosphate + 2 reduced [2Fe-2S]-[ferredoxin] + 2 H(+). It catalyses the reaction dimethylallyl diphosphate + 2 oxidized [2Fe-2S]-[ferredoxin] + H2O = (2E)-4-hydroxy-3-methylbut-2-enyl diphosphate + 2 reduced [2Fe-2S]-[ferredoxin] + 2 H(+). Its pathway is isoprenoid biosynthesis; dimethylallyl diphosphate biosynthesis; dimethylallyl diphosphate from (2E)-4-hydroxy-3-methylbutenyl diphosphate: step 1/1. It participates in isoprenoid biosynthesis; isopentenyl diphosphate biosynthesis via DXP pathway; isopentenyl diphosphate from 1-deoxy-D-xylulose 5-phosphate: step 6/6. Functionally, catalyzes the conversion of 1-hydroxy-2-methyl-2-(E)-butenyl 4-diphosphate (HMBPP) into a mixture of isopentenyl diphosphate (IPP) and dimethylallyl diphosphate (DMAPP). Acts in the terminal step of the DOXP/MEP pathway for isoprenoid precursor biosynthesis. The polypeptide is 4-hydroxy-3-methylbut-2-enyl diphosphate reductase (Chlorobaculum tepidum (strain ATCC 49652 / DSM 12025 / NBRC 103806 / TLS) (Chlorobium tepidum)).